The sequence spans 185 residues: Peptidyl-tRNA hydrolase (185 aa).

Tyrosine 14 contacts tRNA. Histidine 19 (proton acceptor) is an active-site residue. 3 residues coordinate tRNA: phenylalanine 64, asparagine 66, and asparagine 112.

It belongs to the PTH family. Monomer.

It localises to the cytoplasm. It carries out the reaction an N-acyl-L-alpha-aminoacyl-tRNA + H2O = an N-acyl-L-amino acid + a tRNA + H(+). Its function is as follows. Hydrolyzes ribosome-free peptidyl-tRNAs (with 1 or more amino acids incorporated), which drop off the ribosome during protein synthesis, or as a result of ribosome stalling. Functionally, catalyzes the release of premature peptidyl moieties from peptidyl-tRNA molecules trapped in stalled 50S ribosomal subunits, and thus maintains levels of free tRNAs and 50S ribosomes. This is Peptidyl-tRNA hydrolase from Lacticaseibacillus paracasei (strain ATCC 334 / BCRC 17002 / CCUG 31169 / CIP 107868 / KCTC 3260 / NRRL B-441) (Lactobacillus paracasei).